We begin with the raw amino-acid sequence, 212 residues long: Thiamine-phosphate synthase (212 aa).

Residues 43–47 (QYRNK) and asparagine 75 each bind 4-amino-2-methyl-5-(diphosphooxymethyl)pyrimidine. Aspartate 76 and aspartate 95 together coordinate Mg(2+). Serine 114 is a 4-amino-2-methyl-5-(diphosphooxymethyl)pyrimidine binding site. 141-143 (SMT) is a 2-[(2R,5Z)-2-carboxy-4-methylthiazol-5(2H)-ylidene]ethyl phosphate binding site. Position 144 (lysine 144) interacts with 4-amino-2-methyl-5-(diphosphooxymethyl)pyrimidine. Residue glycine 171 participates in 2-[(2R,5Z)-2-carboxy-4-methylthiazol-5(2H)-ylidene]ethyl phosphate binding.

The protein belongs to the thiamine-phosphate synthase family. It depends on Mg(2+) as a cofactor.

It catalyses the reaction 2-[(2R,5Z)-2-carboxy-4-methylthiazol-5(2H)-ylidene]ethyl phosphate + 4-amino-2-methyl-5-(diphosphooxymethyl)pyrimidine + 2 H(+) = thiamine phosphate + CO2 + diphosphate. The enzyme catalyses 2-(2-carboxy-4-methylthiazol-5-yl)ethyl phosphate + 4-amino-2-methyl-5-(diphosphooxymethyl)pyrimidine + 2 H(+) = thiamine phosphate + CO2 + diphosphate. The catalysed reaction is 4-methyl-5-(2-phosphooxyethyl)-thiazole + 4-amino-2-methyl-5-(diphosphooxymethyl)pyrimidine + H(+) = thiamine phosphate + diphosphate. It functions in the pathway cofactor biosynthesis; thiamine diphosphate biosynthesis; thiamine phosphate from 4-amino-2-methyl-5-diphosphomethylpyrimidine and 4-methyl-5-(2-phosphoethyl)-thiazole: step 1/1. In terms of biological role, condenses 4-methyl-5-(beta-hydroxyethyl)thiazole monophosphate (THZ-P) and 2-methyl-4-amino-5-hydroxymethyl pyrimidine pyrophosphate (HMP-PP) to form thiamine monophosphate (TMP). The protein is Thiamine-phosphate synthase of Nitrosomonas eutropha (strain DSM 101675 / C91 / Nm57).